Reading from the N-terminus, the 242-residue chain is 3-deoxy-manno-octulosonate cytidylyltransferase (242 aa).

The protein belongs to the KdsB family.

It is found in the cytoplasm. The enzyme catalyses 3-deoxy-alpha-D-manno-oct-2-ulosonate + CTP = CMP-3-deoxy-beta-D-manno-octulosonate + diphosphate. Its pathway is nucleotide-sugar biosynthesis; CMP-3-deoxy-D-manno-octulosonate biosynthesis; CMP-3-deoxy-D-manno-octulosonate from 3-deoxy-D-manno-octulosonate and CTP: step 1/1. The protein operates within bacterial outer membrane biogenesis; lipopolysaccharide biosynthesis. Functionally, activates KDO (a required 8-carbon sugar) for incorporation into bacterial lipopolysaccharide in Gram-negative bacteria. The chain is 3-deoxy-manno-octulosonate cytidylyltransferase from Mesorhizobium japonicum (strain LMG 29417 / CECT 9101 / MAFF 303099) (Mesorhizobium loti (strain MAFF 303099)).